Here is a 497-residue protein sequence, read N- to C-terminus: Probable pectinesterase 30 (497 aa).

The first 21 residues, 1–21, serve as a signal peptide directing secretion; the sequence is MLVKVFSFFILMIIMVIGVSK. Residues Asn238 and Asn254 are each glycosylated (N-linked (GlcNAc...) asparagine). Thr263 provides a ligand contact to substrate. Asp316 serves as the catalytic Proton donor. Cys330 and Cys350 form a disulfide bridge. Asp337 acts as the Nucleophile in catalysis. N-linked (GlcNAc...) asparagine glycosylation is present at Asn385. The substrate site is built by Arg403 and Trp405.

It belongs to the pectinesterase family. Expressed in siliques.

The protein resides in the secreted. The protein localises to the cell wall. The catalysed reaction is [(1-&gt;4)-alpha-D-galacturonosyl methyl ester](n) + n H2O = [(1-&gt;4)-alpha-D-galacturonosyl](n) + n methanol + n H(+). It functions in the pathway glycan metabolism; pectin degradation; 2-dehydro-3-deoxy-D-gluconate from pectin: step 1/5. Functionally, acts in the modification of cell walls via demethylesterification of cell wall pectin. The chain is Probable pectinesterase 30 (PME30) from Arabidopsis thaliana (Mouse-ear cress).